The following is a 302-amino-acid chain: tRNA dimethylallyltransferase (302 aa).

An ATP-binding site is contributed by 12–19 (GPTASGKS). Residue 14–19 (TASGKS) coordinates substrate. The interaction with substrate tRNA stretch occupies residues 37 to 40 (DSMQ).

Belongs to the IPP transferase family. As to quaternary structure, monomer. Mg(2+) serves as cofactor.

The enzyme catalyses adenosine(37) in tRNA + dimethylallyl diphosphate = N(6)-dimethylallyladenosine(37) in tRNA + diphosphate. In terms of biological role, catalyzes the transfer of a dimethylallyl group onto the adenine at position 37 in tRNAs that read codons beginning with uridine, leading to the formation of N6-(dimethylallyl)adenosine (i(6)A). This is tRNA dimethylallyltransferase from Corynebacterium diphtheriae (strain ATCC 700971 / NCTC 13129 / Biotype gravis).